Consider the following 221-residue polypeptide: Very-long-chain (3R)-3-hydroxyacyl-CoA dehydratase PASTICCINO 2B (221 aa).

Over 1 to 11 (MTGVGSAVRRL) the chain is Cytoplasmic. A helical membrane pass occupies residues 12–32 (YLSVYNWAVFFGWAQVLYYAV). The Lumenal portion of the chain corresponds to 33 to 51 (TTLLESGHEAVYAAVERPL). The helical transmembrane segment at 52–70 (QFAQTAAFLEILHGLVGLV) threads the bilayer. Residues 71–76 (RSPVSA) are Cytoplasmic-facing. A helical membrane pass occupies residues 77–95 (TLPQIGSRLFLTWGILWSF). The Lumenal segment spans residues 96–100 (PETHS). A helical membrane pass occupies residues 101–121 (HILVTSLVISWSITEIIRYSF). Residues 122 to 141 (FGMKETFGFAPSWLLWLRYS) are Cytoplasmic-facing. Residues 142-165 (TFMVLYPTGISSEVGLIYIALPYM) traverse the membrane as a helical segment. Catalysis depends on residues Tyr147 and Glu154. The Lumenal segment spans residues 166–184 (KATEKYCLRMPNKWNFSFD). Residues 185–209 (FSYASILSLAVYVPGSPHMFTYMLA) traverse the membrane as a helical segment. Residues 210–221 (QRKKALAKAKAA) are Cytoplasmic-facing.

It belongs to the very long-chain fatty acids dehydratase HACD family.

It localises to the endoplasmic reticulum membrane. The enzyme catalyses a very-long-chain (3R)-3-hydroxyacyl-CoA = a very-long-chain (2E)-enoyl-CoA + H2O. Its pathway is lipid metabolism; fatty acid biosynthesis. Catalyzes the third of the four reactions of the long-chain fatty acids elongation cycle. This endoplasmic reticulum-bound enzymatic process, allows the addition of two carbons to the chain of long- and very long-chain fatty acids/VLCFAs per cycle. This enzyme catalyzes the dehydration of the 3-hydroxyacyl-CoA intermediate into trans-2,3-enoyl-CoA, within each cycle of fatty acid elongation. Thereby, it participates in the production of VLCFAs of different chain lengths that are involved in multiple biological processes as precursors of membrane lipids and lipid mediators. May be an anti-phosphatase that prevents CDKA-1 dephosphorylation and activation. Involved in the hormonal control of cell division and differentiation. Required for proliferation control of meristematic and non-meristematic cells. Negative regulator of the cell cycle. The polypeptide is Very-long-chain (3R)-3-hydroxyacyl-CoA dehydratase PASTICCINO 2B (PAS2B) (Oryza sativa subsp. japonica (Rice)).